Reading from the N-terminus, the 483-residue chain is MSAPSSPRVTRIAPSPTGDPHVGTAYIGLFNHTLARQSGGRFILRVEDTDRNRYVPDSEKRIFQMMQWLNLTPDESPLQGGPNGPYRQSERFDLYGDYARQLVQSGHAYYAFETSDELAALREEAQKAGHVIAIPSRDLGAAQAQARVDAGEPAVIRLKVDRDGETVVNDLLRDPIHFANKEIDDKVLLKADGFPTYHLANVVDDRLMQVTHVVRAEEWITSTPIHVLLYRAFGWPEPVFAHMPLLRNADKSKISKRKNPTSVEWYQNQGFLPEAMLNFLATMGWTHPDGQEIFDLAEFERVFRLEDVTLGGPVFDLAKLRWYNGKYLREVLSEDDVARRLHAFLMQNKVTLPSVDGPQDPYFRAVTHLMIPRLEVFADFMDKTLYFWSEDYPVNEKAQKAIDAGKELLPELAARLKNLPTFDAASIKEMFHAYAEEKGLKMGKVMPPIRAAVAGTMESPDLPEMLEALGRERVLARVEKAAR.

Positions 14–24 match the 'HIGH' region motif; it reads PSPTGDPHVGT. The short motif at 253–257 is the 'KMSKS' region element; sequence KISKR. Lys-256 provides a ligand contact to ATP.

It belongs to the class-I aminoacyl-tRNA synthetase family. Glutamate--tRNA ligase type 1 subfamily. Monomer.

Its subcellular location is the cytoplasm. It catalyses the reaction tRNA(Glu) + L-glutamate + ATP = L-glutamyl-tRNA(Glu) + AMP + diphosphate. In terms of biological role, catalyzes the attachment of glutamate to tRNA(Glu) in a two-step reaction: glutamate is first activated by ATP to form Glu-AMP and then transferred to the acceptor end of tRNA(Glu). In Deinococcus radiodurans (strain ATCC 13939 / DSM 20539 / JCM 16871 / CCUG 27074 / LMG 4051 / NBRC 15346 / NCIMB 9279 / VKM B-1422 / R1), this protein is Glutamate--tRNA ligase.